A 443-amino-acid chain; its full sequence is Xaa-Pro dipeptidase (443 aa).

Residues Asp244, Asp255, His336, Glu381, and Glu420 each contribute to the Mn(2+) site.

Belongs to the peptidase M24B family. Bacterial-type prolidase subfamily. Requires Mn(2+) as cofactor.

The enzyme catalyses Xaa-L-Pro dipeptide + H2O = an L-alpha-amino acid + L-proline. Functionally, splits dipeptides with a prolyl residue in the C-terminal position. This chain is Xaa-Pro dipeptidase, found in Stenotrophomonas maltophilia (strain R551-3).